The chain runs to 67 residues: UPF0181 protein KPK_1966 (67 aa).

A disordered region spans residues 48–67 (EQIVARFEDEDEDQDEDEDD). A compositionally biased stretch (acidic residues) spans 55-67 (EDEDEDQDEDEDD).

Belongs to the UPF0181 family.

This chain is UPF0181 protein KPK_1966, found in Klebsiella pneumoniae (strain 342).